Here is a 365-residue protein sequence, read N- to C-terminus: Protein RecA (365 aa).

73-80 (GPESSGKT) serves as a coordination point for ATP.

The protein belongs to the RecA family.

It localises to the cytoplasm. Can catalyze the hydrolysis of ATP in the presence of single-stranded DNA, the ATP-dependent uptake of single-stranded DNA by duplex DNA, and the ATP-dependent hybridization of homologous single-stranded DNAs. It interacts with LexA causing its activation and leading to its autocatalytic cleavage. The protein is Protein RecA of Prochlorococcus marinus (strain MIT 9215).